Consider the following 354-residue polypeptide: GTPase Obg (354 aa).

An Obg domain is found at 1–159 (MKFLDQCKIY…RWIWLRLKLI (159 aa)). One can recognise an OBG-type G domain in the interval 160–328 (ADVGLVGLPN…LLRAAYKQVR (169 aa)). GTP contacts are provided by residues 166–173 (GLPNAGKS), 191–195 (FTTLT), 213–216 (DIPG), 280–283 (NKID), and 309–311 (SGV). Mg(2+) contacts are provided by Ser-173 and Thr-193. A compositionally biased stretch (acidic residues) spans 335–345 (EEEIDDDEDHV). Residues 335–354 (EEEIDDDEDHVDETPGGWTP) form a disordered region.

Belongs to the TRAFAC class OBG-HflX-like GTPase superfamily. OBG GTPase family. Monomer. The cofactor is Mg(2+).

The protein localises to the cytoplasm. Functionally, an essential GTPase which binds GTP, GDP and possibly (p)ppGpp with moderate affinity, with high nucleotide exchange rates and a fairly low GTP hydrolysis rate. Plays a role in control of the cell cycle, stress response, ribosome biogenesis and in those bacteria that undergo differentiation, in morphogenesis control. The protein is GTPase Obg of Caulobacter vibrioides (strain ATCC 19089 / CIP 103742 / CB 15) (Caulobacter crescentus).